A 476-amino-acid polypeptide reads, in one-letter code: Adenosylhomocysteinase (476 aa).

Substrate-binding residues include T67, D142, and E202. 203-205 serves as a coordination point for NAD(+); the sequence is TTT. K232 and D236 together coordinate substrate. Residues N237, 266 to 271, E289, N324, 345 to 347, and N390 contribute to the NAD(+) site; these read GYGDVG and IGH.

This sequence belongs to the adenosylhomocysteinase family. Requires NAD(+) as cofactor.

It is found in the cytoplasm. The catalysed reaction is S-adenosyl-L-homocysteine + H2O = L-homocysteine + adenosine. The protein operates within amino-acid biosynthesis; L-homocysteine biosynthesis; L-homocysteine from S-adenosyl-L-homocysteine: step 1/1. In terms of biological role, may play a key role in the regulation of the intracellular concentration of adenosylhomocysteine. The protein is Adenosylhomocysteinase of Prochlorococcus marinus (strain MIT 9303).